The primary structure comprises 98 residues: Large ribosomal subunit protein uL23 (98 aa).

Belongs to the universal ribosomal protein uL23 family. Part of the 50S ribosomal subunit. Contacts protein L29, and trigger factor when it is bound to the ribosome.

In terms of biological role, one of the early assembly proteins it binds 23S rRNA. One of the proteins that surrounds the polypeptide exit tunnel on the outside of the ribosome. Forms the main docking site for trigger factor binding to the ribosome. In Saccharophagus degradans (strain 2-40 / ATCC 43961 / DSM 17024), this protein is Large ribosomal subunit protein uL23.